The following is a 198-amino-acid chain: HTH-type transcriptional regulator BetI (198 aa).

One can recognise an HTH tetR-type domain in the interval 8-68; sequence PLRRRELIDA…ATMRHLLREL (61 aa). The segment at residues 31–50 is a DNA-binding region (H-T-H motif); the sequence is TVAQIAHEAGVSPALAHHYF.

Its pathway is amine and polyamine biosynthesis; betaine biosynthesis via choline pathway [regulation]. In terms of biological role, repressor involved in the biosynthesis of the osmoprotectant glycine betaine. It represses transcription of the choline transporter BetT and the genes of BetAB involved in the synthesis of glycine betaine. The polypeptide is HTH-type transcriptional regulator BetI (Brucella abortus (strain 2308)).